The chain runs to 81 residues: MTDLFSSPDHTLDALGLRCPEPVMMVRKTVRNMQPGETLLIIADDPATTRDIPGFCTFMEHELVAKETDELPYRYLIRKSG.

Catalysis depends on Cys19, which acts as the Cysteine persulfide intermediate.

Belongs to the sulfur carrier protein TusA family. In terms of assembly, interacts with IscS.

Its subcellular location is the cytoplasm. Its pathway is tRNA modification. In terms of biological role, sulfur carrier protein involved in sulfur trafficking in the cell. Part of a sulfur-relay system required for 2-thiolation during synthesis of 2-thiouridine of the modified wobble base 5-methylaminomethyl-2-thiouridine (mnm(5)s(2)U) in tRNA. Interacts with IscS and stimulates its cysteine desulfurase activity. Accepts an activated sulfur from IscS, which is then transferred to TusD, and thus determines the direction of sulfur flow from IscS to 2-thiouridine formation. Also appears to be involved in sulfur transfer for the biosynthesis of molybdopterin. The sequence is that of Sulfur carrier protein TusA from Escherichia coli O17:K52:H18 (strain UMN026 / ExPEC).